The chain runs to 305 residues: Oxygen-dependent coproporphyrinogen-III oxidase (305 aa).

Ser93 provides a ligand contact to substrate. Residues His97 and His107 each contribute to the a divalent metal cation site. Residue His107 is the Proton donor of the active site. 109–111 (NVR) lines the substrate pocket. The a divalent metal cation site is built by His146 and His176. The segment at 241 to 276 (YVEFNLVFDRGTLFGLQSGGRTESILMSLPPQVRWG) is important for dimerization. A substrate-binding site is contributed by 259–261 (GGR).

The protein belongs to the aerobic coproporphyrinogen-III oxidase family. As to quaternary structure, homodimer. It depends on a divalent metal cation as a cofactor.

The protein resides in the cytoplasm. The enzyme catalyses coproporphyrinogen III + O2 + 2 H(+) = protoporphyrinogen IX + 2 CO2 + 2 H2O. Its pathway is porphyrin-containing compound metabolism; protoporphyrin-IX biosynthesis; protoporphyrinogen-IX from coproporphyrinogen-III (O2 route): step 1/1. Functionally, involved in the heme biosynthesis. Catalyzes the aerobic oxidative decarboxylation of propionate groups of rings A and B of coproporphyrinogen-III to yield the vinyl groups in protoporphyrinogen-IX. The chain is Oxygen-dependent coproporphyrinogen-III oxidase from Pseudomonas aeruginosa (strain UCBPP-PA14).